The following is a 938-amino-acid chain: MSDYKSTLNLPETGFPMRGDLAKREPGMLARWTDDDLYGIIRAAKKGKKTFILHDGPPYANGSIHIGHSVNKILKDIIVKSKGLSGYDSPYVPGWDCHGLPIELKVEQEYGKPGEKFTAAEFRAKCREYAATQVDGQRKDFIRLGVLGDWSHPYLTMDFKTEANIIRALGKIIGNGHLHKGAKPVHWCVDCRSALAEAEVEYYDKTSPSIDVAFQAVDQDALKAKFAVSNVNGPISLVIWTTTPWTLPANRAISIAPDFDYALVQIDGQAVILAKDLVESVMQRIGVTDYTILGTVKGAELELLRFTHPFMGFDVPAILGDHVTLDAGTGAVHTAPGHGPDDYVIGQKYGLETANPVGPDGTYLPGTYPTLDGVNVFKANDIVVALLQEKGALLHVEKMQHSYPCCWRHKTPIIFRATPQWFVSMDQKGLRAQSLKEIKGVQWIPDWGQARIESMVANRPDWCISRQRTWGVPMSLFVHKDTEELHPRTLELMEEVAKRVEVDGIQAWWDLDAKEILGDEADQYVKVPDTLDVWFDSGSTHSSVVDVRPEFAGHAADMYLEGSDQHRGWFMSSLMISTAMKGKAPYRQVLTHGFTVDGQGRKMSKSIGNTVSPQDVMNKLGADILRLWVASTDYTGEMAVSDEILKRAADSYRRIRNTARFLLANLNGFDPAKDMVKPEEMVVLDRWAVGCAKAAQEDILKAYEAYDFHEVVQRLMRFCSVEMGSFYLDIIKDRQYTAKADSVARRSCQTALYHIAEALVRWMAPILSFTADEVWGYLPGEREKYVFTGEWYEGLFGLADSEAMNDAFWDELLKVRGEVNKVIEQARADKKVGGSLEAAVTLYAEPELSAKLTALGDELRFVLLTSGATVADYNDAPADAQQSEVLKGLKVALSKAEGEKCPRCWHYTQDVGKVAEHAEICGRCVSNVAGDGEKRKFA.

Residues 58 to 68 (PYANGSIHIGH) carry the 'HIGH' region motif. Lys183 is modified (N6-acetyllysine). Residue Glu561 participates in L-isoleucyl-5'-AMP binding. The short motif at 602–606 (KMSKS) is the 'KMSKS' region element. Residue Lys605 coordinates ATP. Residues Cys901, Cys904, Cys921, and Cys924 each contribute to the Zn(2+) site.

It belongs to the class-I aminoacyl-tRNA synthetase family. IleS type 1 subfamily. As to quaternary structure, monomer. Zn(2+) serves as cofactor.

Its subcellular location is the cytoplasm. The catalysed reaction is tRNA(Ile) + L-isoleucine + ATP = L-isoleucyl-tRNA(Ile) + AMP + diphosphate. Its function is as follows. Catalyzes the attachment of isoleucine to tRNA(Ile). As IleRS can inadvertently accommodate and process structurally similar amino acids such as valine, to avoid such errors it has two additional distinct tRNA(Ile)-dependent editing activities. One activity is designated as 'pretransfer' editing and involves the hydrolysis of activated Val-AMP. The other activity is designated 'posttransfer' editing and involves deacylation of mischarged Val-tRNA(Ile). The sequence is that of Isoleucine--tRNA ligase from Escherichia coli (strain 55989 / EAEC).